The following is a 750-amino-acid chain: Signal transducer and activator of transcription 1-alpha/beta (750 aa).

The residue at position 2 (Ser2) is an N-acetylserine. Lys114, Lys175, Lys296, Lys366, Lys525, and Lys637 each carry N6-methyllysine. Positions 136–317 (LDKQKELDSK…LFQQLIQSSF (182 aa)) form a coiled coil. Residues 573 to 670 (WNDGCIMGFI…ENPLKYLYPN (98 aa)) enclose the SH2 domain. Residue Glu657 is modified to ADP-ribosyl glutamic acid; by PARP14. At Lys665 the chain carries N6-methyllysine. Tyr701 is subject to Phosphotyrosine; by JAK1, JAK2 or TYK2. A Glycyl lysine isopeptide (Lys-Gly) (interchain with G-Cter in SUMO1); alternate cross-link involves residue Lys703. Lys703 is covalently cross-linked (Glycyl lysine isopeptide (Lys-Gly) (interchain with G-Cter in SUMO2); alternate). Position 705 is an ADP-ribosyl glutamic acid; by PARP14 (Glu705). The residue at position 708 (Ser708) is a Phosphoserine; by IKKE. Phosphoserine; by CAMK2 and MAPK14 is present on Ser727. Phosphoserine; by IKKE is present on Ser745. Thr749 is subject to Phosphothreonine; by IKKB.

The protein belongs to the transcription factor STAT family. In terms of assembly, isoform alpha homodimerizes upon IFN-gamma induced phosphorylation. Heterodimer with STAT2 upon IFN-alpha/beta induced phosphorylation. The heterodimer STAT1:STAT2 forms the interferon-stimulated gene factor 3 complex (ISGF3) with IRF9. Interacts (phosphorylated at Ser-727) with PIAS1; the interaction results in release of STAT1 from its target gene. Interacts with IFNAR1; the interaction requires the phosphorylation of IFNAR1 at 'Tyr-466'. Interacts with IFNAR2. Found in a complex with NMI and CREBBP/CBP. Interacts with NMI which is required for CREBBP/CBP recruitment to the complex. Interacts with PTK2/FAK1. Interacts with SRC. Interacts with ERBB4 (phosphorylated). Interacts with PARP9 and DTX3L independently of IFN-beta or IFN-gamma-mediated STAT1 'Tyr-701' phosphorylation. Interacts with histone acetyltransferase EP300/p300 in response to INF-gamma stimulation. Independently of its phosphorylation status, interacts with OTOP1. Interacts with IFNGR1. Interacts with STAT4. As to quaternary structure, (Microbial infection) Interacts with Sendai virus C', C, Y1 and Y2 proteins, preventing activation of ISRE and GAS promoter. (Microbial infection) Interacts with Nipah virus P, V and W proteins preventing activation of ISRE and GAS promoter. In terms of assembly, (Microbial infection) Interacts with Rabies virus phosphoprotein preventing activation of ISRE and GAS promoter. As to quaternary structure, (Microbial infection) Interacts with HCV core protein; the interaction results in STAT1 degradation. (Microbial infection) Interacts with ebolavirus protein VP24. In terms of assembly, (Microbial infection) Interacts with Epstein-Barr virus (EBV) tegument protein BGLF2; this interaction leads to STAT1 dephosphorylation and inhibition. As to quaternary structure, (Microbial infection) Interacts (via N-terminus) with measles V protein; this interaction inhibits STAT1 phosphorylation by Jak1 and thereby the type I interferon signaling pathway. Post-translationally, deubiquitinated by USP13; leading to STAT1 stabilization and positive regulation of type I and type II IFN signalings. Phosphorylated on tyrosine and serine residues in response to a variety of cytokines/growth hormones including IFN-alpha, IFN-gamma, PDGF and EGF. Activated KIT promotes phosphorylation on tyrosine residues and subsequent translocation to the nucleus. Upon EGF stimulation, phosphorylation on Tyr-701 (lacking in beta form) by JAK1, JAK2 or TYK2 promotes dimerization and subsequent translocation to the nucleus. Growth hormone (GH) activates STAT1 signaling only via JAK2. Tyrosine phosphorylated in response to constitutively activated FGFR1, FGFR2, FGFR3 and FGFR4. Phosphorylation on Ser-727 by several kinases including MAPK14, ERK1/2, CAMK2/CAMKII and CK2 in response to IFN-gamma stimulation, is required for maximal transcriptional activity. Phosphorylated on Ser-727 by CAMK2/CAMKII in response to IFN-gamma stimulation and calcium mobilization, promoting activity. Phosphorylated by CAMK2/CAMKII in response to IFN-beta stimulation and calcium mobilization in epithelial cells, promoting activity. Phosphorylation on Ser-727 promotes sumoylation though increasing interaction with PIAS. Phosphorylation on Ser-727 by PRKCD induces apoptosis in response to DNA-damaging agents. Phosphorylated on tyrosine residues when PTK2/FAK1 is activated; most likely this is catalyzed by a SRC family kinase. Dephosphorylation on tyrosine residues by PTPN2 negatively regulates interferon-mediated signaling. Upon viral infection or IFN induction, phosphorylation on Ser-708 occurs much later than phosphorylation on Tyr-701 and is required for the binding of ISGF3 on the ISREs of a subset of IFN-stimulated genes IKBKE-dependent. Phosphorylation at Tyr-701 and Ser-708 are mutually exclusive, phosphorylation at Ser-708 requires previous dephosphorylation of Tyr-701. Phosphorylation at Thr-749 by IKBKB/IKKB promotes transcriptional activation of ARID5A and IL12B by STAT1. Phosphorylation at Thr-749 restricts interferon signaling and anti-inflammatory responses and promotes innate inflammatory responses. In terms of processing, sumoylated with SUMO1, SUMO2 and SUMO3. Sumoylation is enhanced by IFN-gamma-induced phosphorylation on Ser-727, and by interaction with PIAS proteins. Enhances the transactivation activity. Post-translationally, ISGylated. Mono-ADP-ribosylated at Glu-657 and Glu-705 by PARP14; ADP-ribosylation prevents phosphorylation at Tyr-701. However, the role of ADP-ribosylation in the prevention of phosphorylation has been called into question and the lack of phosphorylation may be due to sumoylation of Lys-703. In terms of processing, monomethylated at Lys-525 by SETD2; monomethylation is necessary for phosphorylation at Tyr-701, translocation into the nucleus and activation of the antiviral defense. Post-translationally, (Microbial infection) Ubiquitinated by Herpes simplex virus 2 E3 ubiquitin ligase ICP22.

The protein resides in the cytoplasm. The protein localises to the nucleus. Functionally, signal transducer and transcription activator that mediates cellular responses to interferons (IFNs), cytokine KITLG/SCF and other cytokines and other growth factors. Following type I IFN (IFN-alpha and IFN-beta) binding to cell surface receptors, signaling via protein kinases leads to activation of Jak kinases (TYK2 and JAK1) and to tyrosine phosphorylation of STAT1 and STAT2. The phosphorylated STATs dimerize and associate with ISGF3G/IRF-9 to form a complex termed ISGF3 transcription factor, that enters the nucleus. ISGF3 binds to the IFN stimulated response element (ISRE) to activate the transcription of IFN-stimulated genes (ISG), which drive the cell in an antiviral state. In response to type II IFN (IFN-gamma), STAT1 is tyrosine- and serine-phosphorylated. It then forms a homodimer termed IFN-gamma-activated factor (GAF), migrates into the nucleus and binds to the IFN gamma activated sequence (GAS) to drive the expression of the target genes, inducing a cellular antiviral state. Becomes activated in response to KITLG/SCF and KIT signaling. May mediate cellular responses to activated FGFR1, FGFR2, FGFR3 and FGFR4. Following bacterial lipopolysaccharide (LPS)-induced TLR4 endocytosis, phosphorylated at Thr-749 by IKBKB which promotes binding of STAT1 to the 5'-TTTGAGGC-3' sequence in the ARID5A promoter, resulting in transcriptional activation of ARID5A and subsequent ARID5A-mediated stabilization of IL6. Phosphorylation at Thr-749 also promotes binding of STAT1 to the 5'-TTTGAGTC-3' sequence in the IL12B promoter and activation of IL12B transcription. Involved in food tolerance in small intestine: associates with the Gasdermin-D, p13 cleavage product (13 kDa GSDMD) and promotes transcription of CIITA, inducing type 1 regulatory T (Tr1) cells in upper small intestine. The protein is Signal transducer and activator of transcription 1-alpha/beta (STAT1) of Homo sapiens (Human).